Reading from the N-terminus, the 138-residue chain is Putative pre-16S rRNA nuclease (138 aa).

This sequence belongs to the YqgF nuclease family.

The protein localises to the cytoplasm. Functionally, could be a nuclease involved in processing of the 5'-end of pre-16S rRNA. The sequence is that of Putative pre-16S rRNA nuclease from Shigella dysenteriae serotype 1 (strain Sd197).